The following is a 793-amino-acid chain: ATP-dependent RNA helicase DRS1 (793 aa).

The interval 1–208 (MADDFITTID…TTTDPTLPSS (208 aa)) is disordered. The segment covering 75–89 (KRGKPIRAFKDRKRK) has biased composition (basic residues). 3 stretches are compositionally biased toward acidic residues: residues 94-114 (ATSEDDLEEDEEEEGDSNDDS), 122-144 (SEEDEMDVDMSEGDGDEEDENEI), and 152-184 (ESDEEEEEEEDDYDEEGENEVVDSDSESEEETA). A compositionally biased stretch (low complexity) spans 193–208 (FFSSDPTTTDPTLPSS). The Q motif motif lies at 207–235 (SSFTAMNLSRPLLRALTSLQFTAPTPIQA). Positions 238 to 416 (IPLALLGRDI…KLSLDKPIRV (179 aa)) constitute a Helicase ATP-binding domain. ATP is bound at residue 251 to 258 (AVTGSGKT). A DEAD box motif is present at residues 364–367 (DEAD). In terms of domain architecture, Helicase C-terminal spans 427 to 606 (GLTQEFVRIR…EFKDDIQEIL (180 aa)). Positions 560 to 630 (EADRKMLKAA…EIKKGQNMVE (71 aa)) form a coiled coil. Residues 645–793 (QSGKEKQASK…KKGGKGKGRK (149 aa)) are disordered. Composition is skewed to basic and acidic residues over residues 671 to 688 (SAEKEKEKLKRGKYDGLS) and 726 to 740 (KITEPQPRLEKAGKG). The span at 741-752 (KDKKKGKARRVT) shows a compositional bias: basic residues. Residues 761–771 (SEGKKSHEGMR) show a composition bias toward basic and acidic residues. Positions 782 to 793 (GKKKGGKGKGRK) are enriched in basic residues.

This sequence belongs to the DEAD box helicase family. DDX27/DRS1 subfamily. As to quaternary structure, associates with pre-ribosomal particles.

The protein localises to the nucleus. Its subcellular location is the nucleolus. The enzyme catalyses ATP + H2O = ADP + phosphate + H(+). Its function is as follows. ATP-binding RNA helicase involved in ribosome assembly. This is ATP-dependent RNA helicase DRS1 (DRS1) from Cryptococcus neoformans var. neoformans serotype D (strain JEC21 / ATCC MYA-565) (Filobasidiella neoformans).